The sequence spans 802 residues: Copper-exporting P-type ATPase (802 aa).

HMA domains are found at residues 5–70 (KKTT…YGVA) and 72–138 (ETVE…YDAS). Residues Cys-16, Cys-19, Cys-83, and Cys-86 each coordinate Cu(+). The next 6 membrane-spanning stretches (helical) occupy residues 161-181 (LIIS…HLFN), 192-212 (WFQF…FYVG), 224-244 (MDVL…YEMV), 256-276 (LYFE…YLEA), 411-431 (YFVP…ITLV), and 438-458 (PALV…LGLA). The active-site 4-aspartylphosphate intermediate is the Asp-495. Mg(2+) is bound by residues Asp-690 and Asp-694. 2 consecutive transmembrane segments (helical) span residues 748–767 (LFWA…LGLL) and 771–790 (VAGA…ALRL).

The protein belongs to the cation transport ATPase (P-type) (TC 3.A.3) family. Type IB subfamily.

The protein resides in the cell membrane. It catalyses the reaction Cu(+)(in) + ATP + H2O = Cu(+)(out) + ADP + phosphate + H(+). In terms of biological role, involved in copper export. The chain is Copper-exporting P-type ATPase (copA) from Staphylococcus aureus (strain MW2).